Reading from the N-terminus, the 468-residue chain is Glutamate--tRNA ligase (468 aa).

The 'HIGH' region signature appears at P11–N21. Positions K243–R247 match the 'KMSKS' region motif. ATP is bound at residue K246.

This sequence belongs to the class-I aminoacyl-tRNA synthetase family. Glutamate--tRNA ligase type 1 subfamily. Monomer.

It is found in the cytoplasm. The catalysed reaction is tRNA(Glu) + L-glutamate + ATP = L-glutamyl-tRNA(Glu) + AMP + diphosphate. Functionally, catalyzes the attachment of glutamate to tRNA(Glu) in a two-step reaction: glutamate is first activated by ATP to form Glu-AMP and then transferred to the acceptor end of tRNA(Glu). The polypeptide is Glutamate--tRNA ligase (Cupriavidus pinatubonensis (strain JMP 134 / LMG 1197) (Cupriavidus necator (strain JMP 134))).